The primary structure comprises 442 residues: Trigger factor (442 aa).

The region spanning aspartate 165–proline 250 is the PPIase FKBP-type domain.

This sequence belongs to the FKBP-type PPIase family. Tig subfamily.

The protein resides in the cytoplasm. It catalyses the reaction [protein]-peptidylproline (omega=180) = [protein]-peptidylproline (omega=0). Functionally, involved in protein export. Acts as a chaperone by maintaining the newly synthesized protein in an open conformation. Functions as a peptidyl-prolyl cis-trans isomerase. In Coxiella burnetii (strain CbuK_Q154) (Coxiella burnetii (strain Q154)), this protein is Trigger factor.